The following is a 739-amino-acid chain: Sulfate transporter (739 aa).

The interval 1–44 (MSSENKEQHNLSPRDLPEEAYGFPPELPLGAQRGSSTDLRQFEP) is disordered. A Phosphoserine modification is found at serine 12. The next 2 membrane-spanning stretches (helical) occupy residues 112-132 (MMSG…YSLL) and 137-157 (PIYG…FGTS). Asparagine 205 carries N-linked (GlcNAc...) asparagine glycosylation. Transmembrane regions (helical) follow at residues 227-247 (FMAG…VSVY) and 255-275 (GFVT…LLGL). Asparagine 357 carries an N-linked (GlcNAc...) asparagine glycan. 4 helical membrane passes run 378–398 (LIPN…AITV), 420–440 (AIGF…SAAL), 455–475 (LSAI…APLF), and 524–544 (LLST…CVIL). The 152-residue stretch at 568-719 (TYKNLRSKSG…YSLSEAVAFA (152 aa)) folds into the STAS domain.

This sequence belongs to the SLC26A/SulP transporter (TC 2.A.53) family. N-glycosylated. As to expression, cartilage and intestine. Expressed in the kidney (at protein level).

It is found in the cell membrane. The protein resides in the apical cell membrane. It carries out the reaction oxalate(in) + sulfate(out) = oxalate(out) + sulfate(in). The catalysed reaction is sulfate(out) + 2 chloride(in) = sulfate(in) + 2 chloride(out). The enzyme catalyses oxalate(out) + 2 chloride(in) = oxalate(in) + 2 chloride(out). It catalyses the reaction bromide(in) + chloride(out) = bromide(out) + chloride(in). It carries out the reaction nitrate(in) + chloride(out) = nitrate(out) + chloride(in). The catalysed reaction is iodide(in) + chloride(out) = iodide(out) + chloride(in). In terms of biological role, sulfate transporter which mediates sulfate uptake into chondrocytes in order to maintain adequate sulfation of proteoglycans which is needed for cartilage development. Mediates electroneutral anion exchange of sulfate ions for oxalate ions, sulfate and oxalate ions for chloride and/or hydroxyl ions and chloride ions for bromide, iodide and nitrate ions. The coupling of sulfate transport to both hydroxyl and chloride ions likely serves to ensure transport at both acidic pH when most sulfate uptake is mediated by sulfate-hydroxide exchange and alkaline pH when most sulfate uptake is mediated by sulfate-chloride exchange. Essential for chondrocyte proliferation, differentiation and cell size expansion. The sequence is that of Sulfate transporter (Slc26a2) from Rattus norvegicus (Rat).